The following is a 187-amino-acid chain: MYTVADLKKGLKLTLDGAPYLVIAFEFSKPGKGQALYRTKMRNMITGVILDRTYRSGETFEPARLEERRMQYLYKEDTHYTFMDNQTFEQVQMDEDAVGDAKNFLIDNLEVDILLFGEKAIGVTLPNFVNLRVVQTDPWVKGDTSGSDSKPATVETGYILRVPPFIEEGEMIVIDTRSGEYSTRVKG.

Belongs to the elongation factor P family.

The protein localises to the cytoplasm. The protein operates within protein biosynthesis; polypeptide chain elongation. Involved in peptide bond synthesis. Stimulates efficient translation and peptide-bond synthesis on native or reconstituted 70S ribosomes in vitro. Probably functions indirectly by altering the affinity of the ribosome for aminoacyl-tRNA, thus increasing their reactivity as acceptors for peptidyl transferase. This is Elongation factor P 2 from Geobacter sulfurreducens (strain ATCC 51573 / DSM 12127 / PCA).